Consider the following 205-residue polypeptide: Phosphoribosyl-dephospho-CoA transferase (205 aa).

Catalysis depends on residues Asp134 and Asp136.

This sequence belongs to the MdcG family.

It carries out the reaction apo-[malonate decarboxylase ACP] + 2'-(5''-triphospho-alpha-D-ribosyl)-3'-dephospho-CoA = holo-[malonate decarboxylase ACP] + diphosphate. Functionally, transfers 2'-(5-triphosphoribosyl)-3'-dephosphocoenzyme-A to the apo-[acyl-carrier-protein] of the malonate decarboxylase to yield holo-[acyl-carrier-protein]. The polypeptide is Phosphoribosyl-dephospho-CoA transferase (Klebsiella pneumoniae subsp. pneumoniae (strain ATCC 700721 / MGH 78578)).